The sequence spans 1390 residues: DNA-directed RNA polymerase subunit beta (1390 aa).

It belongs to the RNA polymerase beta chain family. In terms of assembly, the RNAP catalytic core consists of 2 alpha, 1 beta, 1 beta' and 1 omega subunit. When a sigma factor is associated with the core the holoenzyme is formed, which can initiate transcription.

It carries out the reaction RNA(n) + a ribonucleoside 5'-triphosphate = RNA(n+1) + diphosphate. DNA-dependent RNA polymerase catalyzes the transcription of DNA into RNA using the four ribonucleoside triphosphates as substrates. In Rhodopseudomonas palustris (strain HaA2), this protein is DNA-directed RNA polymerase subunit beta.